The chain runs to 359 residues: Fructose-bisphosphate aldolase (359 aa).

S62 contributes to the D-glyceraldehyde 3-phosphate binding site. D110 acts as the Proton donor in catalysis. The Zn(2+) site is built by H111, D145, E175, and H227. G228 contributes to the dihydroxyacetone phosphate binding site. Zn(2+) is bound at residue H265. Residues G266–S268 and N287–T290 contribute to the dihydroxyacetone phosphate site.

This sequence belongs to the class II fructose-bisphosphate aldolase family. As to quaternary structure, homodimer. Zn(2+) is required as a cofactor.

It catalyses the reaction beta-D-fructose 1,6-bisphosphate = D-glyceraldehyde 3-phosphate + dihydroxyacetone phosphate. Its pathway is carbohydrate degradation; glycolysis; D-glyceraldehyde 3-phosphate and glycerone phosphate from D-glucose: step 4/4. In terms of biological role, catalyzes the aldol condensation of dihydroxyacetone phosphate (DHAP or glycerone-phosphate) with glyceraldehyde 3-phosphate (G3P) to form fructose 1,6-bisphosphate (FBP) in gluconeogenesis and the reverse reaction in glycolysis. This chain is Fructose-bisphosphate aldolase (fba), found in Haemophilus influenzae (strain ATCC 51907 / DSM 11121 / KW20 / Rd).